The sequence spans 185 residues: uncharacterized protein (185 aa).

Transmembrane regions (helical) follow at residues 1-19 (MLNIVLIIGLLAIFNTSSA) and 105-125 (AGFIAQCIIFLFVYTIVTMDV).

The protein localises to the membrane. This is an uncharacterized protein from Caenorhabditis elegans.